Consider the following 920-residue polypeptide: Rho guanine nucleotide exchange factor 1 (920 aa).

The RGSL domain occupies 39 to 230 (DQNSQFQSLE…SLYMRHLGVR (192 aa)). The disordered stretch occupies residues 231–404 (TKSGDKKSGR…PGWRELVPPD (174 aa)). Residues 281–311 (DCRHLKVEADAEKPGPADRKGGLGMSSRDRT) are compositionally biased toward basic and acidic residues. Over residues 364–380 (STEDNGETESPEPGDDG) the composition is skewed to acidic residues. 5 positions are modified to phosphoserine: S373, G386, E390, S408, and S412. Residues 415 to 604 (KRQEVISELL…REILHHVNQA (190 aa)) form the DH domain. Phosphothreonine occurs at positions 432 and 694. The region spanning 646–759 (KLVHEGPLTW…WCNLITETAG (114 aa)) is the PH domain. Phosphotyrosine; by JAK2 is present on Y737. Disordered stretches follow at residues 764 to 797 (PAPA…AEMA) and 840 to 864 (TEED…PGPV). The stretch at 865–894 (HTQEIEENLLSLEVAIRQLEELEEEFCRLR) forms a coiled coil. Position 905 is a phosphoserine (S905).

As to quaternary structure, interacts with RHOA, GNA12 and GNA13. Homooligomerizes through the coiled coil region. Interacts with CTNNAL1. May interact with CCPG1. In terms of processing, phosphorylated by PKCA. Angiotensin-2 induced Tyr-737 phosphorylation is mediated by JAK2. Isoform 5 is phosphorylated at 'Ser-390'. Ubiquitously expressed.

The protein localises to the cytoplasm. Its subcellular location is the membrane. In terms of biological role, seems to play a role in the regulation of RhoA GTPase by guanine nucleotide-binding alpha-12 (GNA12) and alpha-13 (GNA13) subunits. Acts as a GTPase-activating protein (GAP) for GNA12 and GNA13, and as guanine nucleotide exchange factor (GEF) for RhoA GTPase. Activated G alpha 13/GNA13 stimulates the RhoGEF activity through interaction with the RGS-like domain. This GEF activity is inhibited by binding to activated GNA12. Mediates angiotensin-2-induced RhoA activation. Isoform 3 and isoform 4 do not homooligomerize and show an enhanced RhoGEF activity. In lymphoid follicles, may trigger activation of GNA13 as part of S1PR2-dependent signaling pathway that leads to inhibition of germinal center (GC) B cell growth and migration outside the GC niche. The protein is Rho guanine nucleotide exchange factor 1 (Arhgef1) of Mus musculus (Mouse).